Here is a 369-residue protein sequence, read N- to C-terminus: Peptide chain release factor 2 (369 aa).

Position 249 is an N5-methylglutamine (Gln-249).

The protein belongs to the prokaryotic/mitochondrial release factor family. Methylated by PrmC. Methylation increases the termination efficiency of RF2.

The protein resides in the cytoplasm. Functionally, peptide chain release factor 2 directs the termination of translation in response to the peptide chain termination codons UGA and UAA. The protein is Peptide chain release factor 2 of Thermosipho melanesiensis (strain DSM 12029 / CIP 104789 / BI429).